Consider the following 311-residue polypeptide: MQAKILRIATRKSPLAICQACYVCNKLKHYHPHIQTELIPIITTGDTSLHTVSKTNKIKKGAFIKELEYALIEHRADIAVHSMKDVTVLLPKELIIPVLCKRHDPRDAFVSIQYPNIHSLPTGSIIGTSSLRRQCQIRAQRSDLILHDLRGNINTRIKKLHQGQYNAIILAVAGLTRLKLTKYIQTYIDPSELLPAMGQGVIAIECRINDINTISLLSPLYHKETSLCIKSERAVTTYLESYCRLPIASYAEIQNNQIWLRALIGLPDGSIIIRTEGIASLDKAEELGLNLAKDLLIQFKKNTHFDINSIK.

Cys-243 is modified (S-(dipyrrolylmethanemethyl)cysteine).

This sequence belongs to the HMBS family. Monomer. Requires dipyrromethane as cofactor.

The catalysed reaction is 4 porphobilinogen + H2O = hydroxymethylbilane + 4 NH4(+). Its pathway is porphyrin-containing compound metabolism; protoporphyrin-IX biosynthesis; coproporphyrinogen-III from 5-aminolevulinate: step 2/4. Functionally, tetrapolymerization of the monopyrrole PBG into the hydroxymethylbilane pre-uroporphyrinogen in several discrete steps. This chain is Porphobilinogen deaminase, found in Blochmanniella floridana.